The primary structure comprises 331 residues: Vitamin B12 import system permease protein BtuC (331 aa).

9 helical membrane-spanning segments follow: residues 18–38 (WLFG…CAGE), 64–84 (LAVL…QALF), 91–111 (PGLL…VLLG), 114–134 (VLPG…ITFI), 149–169 (LLAG…AVYF), 194–214 (LWLM…SQPL), 243–263 (GWMV…GLVI), 277–297 (VLLP…DIIA), and 305–325 (ELPI…WLLL).

This sequence belongs to the binding-protein-dependent transport system permease family. FecCD subfamily. In terms of assembly, the complex is composed of two ATP-binding proteins (BtuD), two transmembrane proteins (BtuC) and a solute-binding protein (BtuF).

It localises to the cell inner membrane. Part of the ABC transporter complex BtuCDF involved in vitamin B12 import. Involved in the translocation of the substrate across the membrane. The chain is Vitamin B12 import system permease protein BtuC from Klebsiella pneumoniae subsp. pneumoniae (strain ATCC 700721 / MGH 78578).